A 445-amino-acid chain; its full sequence is Protein cereblon (445 aa).

A disordered region spans residues Met-1–Asn-48. Positions Asp-24–Asp-38 are enriched in acidic residues. Position 25 is a phosphoserine (Ser-25). One can recognise a Lon N-terminal domain in the interval Ile-84 to Thr-322. Positions Cys-321–Ile-429 constitute a CULT domain. Residues Cys-326 and Cys-329 each coordinate Zn(2+). His-381, Trp-383, and Trp-389 together coordinate (S)-thalidomide. Zn(2+) is bound by residues Cys-394 and Cys-397.

Belongs to the CRBN family. In terms of assembly, component of a DCX (DDB1-CUL4-X-box) protein ligase complex, at least composed of CRBN, CUL4A, DDB1 and RBX1. Interacts directly with DDB1. Interacts with KCNT1. Interacts with ILF2. Interacts with TRAF6 and ECSIT. Post-translationally, ubiquitinated, ubiquitination is mediated by its own DCX protein ligase complex. In terms of tissue distribution, highly expressed in brain.

Its subcellular location is the cytoplasm. The protein localises to the nucleus. The protein resides in the membrane. It participates in protein modification; protein ubiquitination. Its function is as follows. Substrate recognition component of a DCX (DDB1-CUL4-X-box) E3 protein ligase complex that mediates the ubiquitination and subsequent proteasomal degradation of target proteins, such as MEIS2, ILF2 or GLUL. Normal degradation of key regulatory proteins is required for normal limb outgrowth and expression of the fibroblast growth factor FGF8. Maintains presynaptic glutamate release and consequently, cognitive functions such as memory and learning, by negatively regulating large-conductance calcium-activated potassium (BK) channels in excitatory neurons. Likely to function by regulating the assembly and neuronal surface expression of BK channels via its interaction with KCNT1. May also be involved in regulating anxiety-like behaviors via a BK channel-independent mechanism. Plays a negative role in TLR4 signaling by interacting with TRAF6 and ECSIT, leading to inhibition of ECSIT ubiquitination, an important step of the signaling. This Mus musculus (Mouse) protein is Protein cereblon (Crbn).